Here is a 118-residue protein sequence, read N- to C-terminus: MIQDYLIIGIFLIASFIFGMVVLLTASLVRPKKPNKEKLSTYECGVETTGSTWIRFKVSYFMYGLVFLLFDVETVFLLPWAVKFKSLGLFALFEMVIFIGILIIGLWYAWKEGALEWK.

The next 3 helical transmembrane spans lie at 6–26 (LIIG…LLTA), 61–81 (FMYG…LPWA), and 87–107 (LGLF…IGLW).

This sequence belongs to the complex I subunit 3 family. As to quaternary structure, NDH-1 is composed of 14 different subunits. Subunits NuoA, H, J, K, L, M, N constitute the membrane sector of the complex.

It is found in the cell membrane. It catalyses the reaction a quinone + NADH + 5 H(+)(in) = a quinol + NAD(+) + 4 H(+)(out). Its function is as follows. NDH-1 shuttles electrons from NADH, via FMN and iron-sulfur (Fe-S) centers, to quinones in the respiratory chain. The immediate electron acceptor for the enzyme in this species is believed to be a menaquinone. Couples the redox reaction to proton translocation (for every two electrons transferred, four hydrogen ions are translocated across the cytoplasmic membrane), and thus conserves the redox energy in a proton gradient. The sequence is that of NADH-quinone oxidoreductase subunit A from Clostridium beijerinckii (strain ATCC 51743 / NCIMB 8052) (Clostridium acetobutylicum).